The chain runs to 1055 residues: Vacuolar protein sorting-associated protein 54 (1055 aa).

Residues 363–383 (TKKIIEVHQKYEQKKHLLAKL) adopt a coiled-coil conformation. Positions 774 to 794 (IDDGPTKKPFKRTGSSATIDS) are disordered.

Belongs to the VPS54 family. Component of the Golgi-associated retrograde protein (GARP) complex, also called VFT (VPS fifty-three) complex, composed of VPS51, VPS52, VPS53 and VPS54.

It localises to the golgi apparatus. The protein localises to the trans-Golgi network. In terms of biological role, acts as a component of the GARP complex that is involved in retrograde transport from early and late endosomes to the trans-Golgi network (TGN). The GARP complex facilitates tethering as well as SNARE complex assembly at the Golgi. The chain is Vacuolar protein sorting-associated protein 54 (vps-54) from Caenorhabditis briggsae.